The primary structure comprises 458 residues: Cell division protein FtsZ (458 aa).

Residues 22–26 (GAGGN), 109–111 (GTG), E140, R144, and D188 each bind GTP. The segment at 319–458 (KAEEEASKQP…IPFFKHRRQD (140 aa)) is disordered. The segment covering 368 to 379 (NTISHEAPTQSI) has biased composition (polar residues). Positions 401–418 (KQDRKENNRPQPVENKEK) are enriched in basic and acidic residues. The span at 425–439 (SFSSDDSTSISQIET) shows a compositional bias: low complexity.

This sequence belongs to the FtsZ family. Homodimer. Polymerizes to form a dynamic ring structure in a strictly GTP-dependent manner. Interacts directly with several other division proteins.

It localises to the cytoplasm. Functionally, essential cell division protein that forms a contractile ring structure (Z ring) at the future cell division site. The regulation of the ring assembly controls the timing and the location of cell division. One of the functions of the FtsZ ring is to recruit other cell division proteins to the septum to produce a new cell wall between the dividing cells. Binds GTP and shows GTPase activity. This Lactobacillus johnsonii (strain CNCM I-12250 / La1 / NCC 533) protein is Cell division protein FtsZ.